A 183-amino-acid chain; its full sequence is Ribosome-recycling factor (183 aa).

It belongs to the RRF family.

Its subcellular location is the cytoplasm. In terms of biological role, responsible for the release of ribosomes from messenger RNA at the termination of protein biosynthesis. May increase the efficiency of translation by recycling ribosomes from one round of translation to another. The polypeptide is Ribosome-recycling factor (Afipia carboxidovorans (strain ATCC 49405 / DSM 1227 / KCTC 32145 / OM5) (Oligotropha carboxidovorans)).